A 59-amino-acid polypeptide reads, in one-letter code: Light-harvesting protein B-800-850 alpha chain A (59 aa).

Residues 1 to 11 (MNQARIWTVVK) are Cytoplasmic-facing. The chain crosses the membrane as a helical span at residues 12 to 35 (PTVGLPLLLGSVTVIAILVHFAVL). His-31 lines the a bacteriochlorophyll pocket. Topologically, residues 36–59 (SHTTWFSKYWNGKAAAIESSVNVG) are periplasmic.

The protein belongs to the antenna complex alpha subunit family. As to quaternary structure, the core complex is formed by different alpha and beta chains, binding bacteriochlorophyll molecules, and arranged most probably in tetrameric structures disposed around the reaction center. The non-pigmented gamma chains may constitute additional components.

Its subcellular location is the cell inner membrane. Its function is as follows. Antenna complexes are light-harvesting systems, which transfer the excitation energy to the reaction centers. In Rhodopseudomonas palustris (strain ATCC BAA-98 / CGA009), this protein is Light-harvesting protein B-800-850 alpha chain A (pucAA).